The following is a 423-amino-acid chain: Heat shock transcription factor, X-linked (423 aa).

A compositionally biased stretch (basic and acidic residues) spans 1-25; that stretch reads MEDKRSLSMARCEERNSRGQDHGLE. Disordered regions lie at residues 1–56, 215–303, and 397–423; these read MEDK…STGS, KSAP…EGSQ, and PHSH…DQST. The DNA-binding element occupies 98–282; sequence PFPQKLWRLV…PATPVMVPDS (185 aa). Residue K215 forms a Glycyl lysine isopeptide (Lys-Gly) (interchain with G-Cter in SUMO1) linkage. The segment covering 243 to 254 has biased composition (polar residues); it reads HTSPNENDQVTP.

The protein belongs to the HSF family. In terms of tissue distribution, testis-specific.

The protein resides in the nucleus. It is found in the cytoplasm. The polypeptide is Heat shock transcription factor, X-linked (HSFX1) (Homo sapiens (Human)).